A 627-amino-acid chain; its full sequence is Chaperone protein DnaK (627 aa).

The residue at position 197 (T197) is a Phosphothreonine; by autocatalysis. Low complexity predominate over residues 598–611 (AYAKEQGGQQGAAD). The tract at residues 598 to 627 (AYAKEQGGQQGAADAGKKADDDDVIDAEVE) is disordered. A compositionally biased stretch (acidic residues) spans 618–627 (DDDVIDAEVE).

The protein belongs to the heat shock protein 70 family.

Its function is as follows. Acts as a chaperone. The protein is Chaperone protein DnaK of Sulfurovum sp. (strain NBC37-1).